Consider the following 113-residue polypeptide: Protein FMC1 homolog (113 aa).

A disordered region spans residues 94-113 (SAGLVGLQLPHQPGGKGWEP).

It belongs to the FMC1 family. In terms of assembly, interacts with ATPAF2.

It localises to the mitochondrion. Plays a role in the assembly/stability of the mitochondrial membrane ATP synthase (F(1)F(0) ATP synthase or Complex V). The polypeptide is Protein FMC1 homolog (Rattus norvegicus (Rat)).